The primary structure comprises 218 residues: Glutathione S-transferase Mu 3 (218 aa).

The GST N-terminal domain maps to 2–88 (PMTLGYWNTR…YLGRKHNLCG (87 aa)). Glutathione is bound by residues 7–8 (YW), 46–50 (WLSEK), and 59–60 (NL). A Glycyl lysine isopeptide (Lys-Gly) (interchain with G-Cter in SUMO2) cross-link involves residue lysine 50. Residue lysine 69 forms a Glycyl lysine isopeptide (Lys-Gly) (interchain with G-Cter in SUMO2) linkage. A glutathione-binding site is contributed by 72–73 (QS). The region spanning 90–208 (TEEERIRVDT…KSSRFLPRPV (119 aa)) is the GST C-terminal domain.

Belongs to the GST superfamily. Mu family. As to quaternary structure, homodimer.

It is found in the cytoplasm. It carries out the reaction RX + glutathione = an S-substituted glutathione + a halide anion + H(+). Its function is as follows. Conjugation of reduced glutathione to a wide number of exogenous and endogenous hydrophobic electrophiles. The protein is Glutathione S-transferase Mu 3 (Gstm3) of Mus musculus (Mouse).